The sequence spans 360 residues: UDP-N-acetylglucosamine--N-acetylmuramyl-(pentapeptide) pyrophosphoryl-undecaprenol N-acetylglucosamine transferase (360 aa).

Positions 198 and 289 each coordinate UDP-N-acetyl-alpha-D-glucosamine.

The protein belongs to the glycosyltransferase 28 family. MurG subfamily.

It localises to the cell membrane. It carries out the reaction Mur2Ac(oyl-L-Ala-gamma-D-Glu-L-Lys-D-Ala-D-Ala)-di-trans,octa-cis-undecaprenyl diphosphate + UDP-N-acetyl-alpha-D-glucosamine = beta-D-GlcNAc-(1-&gt;4)-Mur2Ac(oyl-L-Ala-gamma-D-Glu-L-Lys-D-Ala-D-Ala)-di-trans,octa-cis-undecaprenyl diphosphate + UDP + H(+). It functions in the pathway cell wall biogenesis; peptidoglycan biosynthesis. Functionally, cell wall formation. Catalyzes the transfer of a GlcNAc subunit on undecaprenyl-pyrophosphoryl-MurNAc-pentapeptide (lipid intermediate I) to form undecaprenyl-pyrophosphoryl-MurNAc-(pentapeptide)GlcNAc (lipid intermediate II). The protein is UDP-N-acetylglucosamine--N-acetylmuramyl-(pentapeptide) pyrophosphoryl-undecaprenol N-acetylglucosamine transferase of Streptococcus pyogenes serotype M18 (strain MGAS8232).